The chain runs to 271 residues: Calretinin (271 aa).

EF-hand domains lie at 16-51, 63-98, 107-142, 151-186, 195-230, and 235-270; these read LTAS…LEKA, NFGE…EENF, GSSA…LLKK, KLQE…QENF, LTSE…LYEK, and MNIQ…SEPP. Residues aspartate 29, aspartate 31, asparagine 33, tyrosine 35, glutamate 40, aspartate 76, asparagine 78, aspartate 80, lysine 82, glutamate 87, aspartate 120, aspartate 122, serine 124, tyrosine 126, glutamate 131, aspartate 164, asparagine 166, aspartate 168, lysine 170, glutamate 175, aspartate 208, aspartate 210, serine 212, tyrosine 214, and glutamate 219 each contribute to the Ca(2+) site. Phosphotyrosine is present on tyrosine 214.

The protein belongs to the calbindin family. Brain.

The protein resides in the synapse. The protein localises to the cell projection. It localises to the dendrite. Calcium-binding protein involved in calcium homeostasis and signal transduction. It plays a critical role in buffering intracellular calcium levels and modulating calcium-dependent signaling pathways. Predominantly expressed in specific neuronal populations, influences synaptic plasticity and neuronal excitability, contributing to learning and memory. During embryonic development, it facilitates neuronal differentiation and maturation. This Homo sapiens (Human) protein is Calretinin.